The primary structure comprises 922 residues: Isoleucine--tRNA ligase (922 aa).

The short motif at 57–67 (PYANGDIHMGH) is the 'HIGH' region element. Glu-553 contributes to the L-isoleucyl-5'-AMP binding site. The 'KMSKS' region motif lies at 594-598 (KMSKS). Lys-597 is an ATP binding site. Positions 889, 892, 909, and 912 each coordinate Zn(2+).

The protein belongs to the class-I aminoacyl-tRNA synthetase family. IleS type 1 subfamily. Monomer. The cofactor is Zn(2+).

Its subcellular location is the cytoplasm. The enzyme catalyses tRNA(Ile) + L-isoleucine + ATP = L-isoleucyl-tRNA(Ile) + AMP + diphosphate. Its function is as follows. Catalyzes the attachment of isoleucine to tRNA(Ile). As IleRS can inadvertently accommodate and process structurally similar amino acids such as valine, to avoid such errors it has two additional distinct tRNA(Ile)-dependent editing activities. One activity is designated as 'pretransfer' editing and involves the hydrolysis of activated Val-AMP. The other activity is designated 'posttransfer' editing and involves deacylation of mischarged Val-tRNA(Ile). In Bacillus licheniformis (strain ATCC 14580 / DSM 13 / JCM 2505 / CCUG 7422 / NBRC 12200 / NCIMB 9375 / NCTC 10341 / NRRL NRS-1264 / Gibson 46), this protein is Isoleucine--tRNA ligase.